A 276-amino-acid polypeptide reads, in one-letter code: NADPH-dependent 7-cyano-7-deazaguanine reductase (276 aa).

A substrate-binding site is contributed by 83-85; the sequence is IES. 85–86 serves as a coordination point for NADPH; it reads SK. Cys184 functions as the Thioimide intermediate in the catalytic mechanism. Asp191 functions as the Proton donor in the catalytic mechanism. Position 223–224 (223–224) interacts with substrate; the sequence is HE. 252 to 253 is an NADPH binding site; sequence RG.

It belongs to the GTP cyclohydrolase I family. QueF type 2 subfamily. Homodimer.

The protein resides in the cytoplasm. It catalyses the reaction 7-aminomethyl-7-carbaguanine + 2 NADP(+) = 7-cyano-7-deazaguanine + 2 NADPH + 3 H(+). It participates in tRNA modification; tRNA-queuosine biosynthesis. Its function is as follows. Catalyzes the NADPH-dependent reduction of 7-cyano-7-deazaguanine (preQ0) to 7-aminomethyl-7-deazaguanine (preQ1). In Pseudomonas putida (strain ATCC 47054 / DSM 6125 / CFBP 8728 / NCIMB 11950 / KT2440), this protein is NADPH-dependent 7-cyano-7-deazaguanine reductase.